We begin with the raw amino-acid sequence, 654 residues long: Cysteine-rich receptor-like protein kinase 40 (654 aa).

The N-terminal stretch at 1-27 (MGKCSALMIFLSSSLLLVLQTLHVVNA) is a signal peptide. 2 consecutive Gnk2-homologous domains span residues 28–131 (VKCF…NQST) and 143–250 (WPSP…LYSF). The Extracellular portion of the chain corresponds to 28–287 (VKCFGNSFNG…VKKGKSIGYG (260 aa)). 6 N-linked (GlcNAc...) asparagine glycosylation sites follow: Asn-38, Asn-65, Asn-128, Asn-154, Asn-167, and Asn-256. Residues 288–308 (GIIAIVVVFTFINLLVFIGFI) traverse the membrane as a helical segment. Over 309–654 (KVYARRGKLN…DDVFTELSCR (346 aa)) the chain is Cytoplasmic. A Protein kinase domain is found at 348–619 (FSSENTLGQG…VIIWLGSETI (272 aa)). ATP-binding positions include 354–362 (LGQGGFGTV) and Lys-376. Phosphotyrosine is present on Tyr-421. Asp-473 functions as the Proton acceptor in the catalytic mechanism. Ser-477 carries the post-translational modification Phosphoserine. Thr-513 carries the post-translational modification Phosphothreonine. Tyr-521 carries the post-translational modification Phosphotyrosine.

The protein belongs to the protein kinase superfamily. Ser/Thr protein kinase family. CRK subfamily.

It is found in the membrane. It carries out the reaction L-seryl-[protein] + ATP = O-phospho-L-seryl-[protein] + ADP + H(+). It catalyses the reaction L-threonyl-[protein] + ATP = O-phospho-L-threonyl-[protein] + ADP + H(+). The chain is Cysteine-rich receptor-like protein kinase 40 (CRK40) from Arabidopsis thaliana (Mouse-ear cress).